A 236-amino-acid polypeptide reads, in one-letter code: Ubiquinone biosynthesis O-methyltransferase (236 aa).

Positions 40, 59, 80, and 124 each coordinate S-adenosyl-L-methionine.

The protein belongs to the methyltransferase superfamily. UbiG/COQ3 family.

It catalyses the reaction a 3-demethylubiquinol + S-adenosyl-L-methionine = a ubiquinol + S-adenosyl-L-homocysteine + H(+). It carries out the reaction a 3-(all-trans-polyprenyl)benzene-1,2-diol + S-adenosyl-L-methionine = a 2-methoxy-6-(all-trans-polyprenyl)phenol + S-adenosyl-L-homocysteine + H(+). It participates in cofactor biosynthesis; ubiquinone biosynthesis. Its function is as follows. O-methyltransferase that catalyzes the 2 O-methylation steps in the ubiquinone biosynthetic pathway. This chain is Ubiquinone biosynthesis O-methyltransferase, found in Saccharophagus degradans (strain 2-40 / ATCC 43961 / DSM 17024).